The sequence spans 464 residues: ATP synthase subunit beta (464 aa).

152 to 159 (GGAGVGKT) lines the ATP pocket.

This sequence belongs to the ATPase alpha/beta chains family. As to quaternary structure, F-type ATPases have 2 components, CF(1) - the catalytic core - and CF(0) - the membrane proton channel. CF(1) has five subunits: alpha(3), beta(3), gamma(1), delta(1), epsilon(1). CF(0) has three main subunits: a(1), b(2) and c(9-12). The alpha and beta chains form an alternating ring which encloses part of the gamma chain. CF(1) is attached to CF(0) by a central stalk formed by the gamma and epsilon chains, while a peripheral stalk is formed by the delta and b chains.

The protein localises to the cell inner membrane. The catalysed reaction is ATP + H2O + 4 H(+)(in) = ADP + phosphate + 5 H(+)(out). In terms of biological role, produces ATP from ADP in the presence of a proton gradient across the membrane. The catalytic sites are hosted primarily by the beta subunits. The chain is ATP synthase subunit beta from Aliarcobacter butzleri (strain RM4018) (Arcobacter butzleri).